Here is a 428-residue protein sequence, read N- to C-terminus: GTPase HflX (428 aa).

Residues 214–374 enclose the Hflx-type G domain; that stretch reads PVVAIVGYTN…AIERELFKET (161 aa). Residues 220–227, 245–249, 267–270, 333–336, and 352–354 each bind GTP; these read GYTNAGKS, FATLD, DTVG, NKID, and SAK. The Mg(2+) site is built by Ser-227 and Thr-247.

It belongs to the TRAFAC class OBG-HflX-like GTPase superfamily. HflX GTPase family. Monomer. Associates with the 50S ribosomal subunit. It depends on Mg(2+) as a cofactor.

The protein resides in the cytoplasm. Its function is as follows. GTPase that associates with the 50S ribosomal subunit and may have a role during protein synthesis or ribosome biogenesis. The polypeptide is GTPase HflX (Caldanaerobacter subterraneus subsp. tengcongensis (strain DSM 15242 / JCM 11007 / NBRC 100824 / MB4) (Thermoanaerobacter tengcongensis)).